The chain runs to 1205 residues: Caskin-2 (1205 aa).

ANK repeat units lie at residues 48–77 (DGFS…SVDI), 81–110 (NGMR…SVNA), 114–143 (DGQI…NPCH), 147–176 (GKKT…CVSL), 188–217 (NFTT…EINK), and 220–249 (KMGT…DVNI). The SH3 domain occupies 281 to 347 (SGILKVRALK…PPSIVEVISK (67 aa)). Polar residues-rich tracts occupy residues 377 to 388 (SPGSQLGINPDT) and 398 to 411 (GSES…SGQS). The tract at residues 377-411 (SPGSQLGINPDTSVAGDRHSVGSESSVRSAGSGQS) is disordered. 2 SAM domains span residues 468–531 (KDAE…LIVA) and 537–601 (QIPV…LLDL). The span at 666 to 687 (RRSFSQESISSRSQGSGHSQES) shows a compositional bias: low complexity. 4 disordered regions span residues 666 to 689 (RRSF…ESAS), 784 to 964 (RPGR…QRHL), 984 to 1054 (QIAA…SQEP), and 1132 to 1155 (SEAS…KGPP). Positions 823–840 (SSMSSAEGQSPEGQSSVK) are enriched in polar residues. Low complexity predominate over residues 908 to 919 (ISSQHSSSESIP). Residues 942 to 959 (DATSELSPTQESQLQSAE) show a composition bias toward polar residues. Residues 1009–1037 (KNEEHDFNLTESDTVKRRPKVKEKEEESP) show a composition bias toward basic and acidic residues. Composition is skewed to polar residues over residues 1042–1054 (ANNS…SQEP) and 1137–1155 (REQT…KGPP).

The sequence is that of Caskin-2 (caskin2) from Xenopus laevis (African clawed frog).